The chain runs to 203 residues: Large ribosomal subunit protein uL22 (203 aa).

Positions 138 to 167 (PENTQSGALSQQSQAEQPQNDPENGVDSQL) are enriched in polar residues. The disordered stretch occupies residues 138 to 203 (PENTQSGALS…TVLAQEKEVK (66 aa)). The segment covering 168-177 (SAKTNSTTTA) has biased composition (low complexity). A compositionally biased stretch (polar residues) spans 183-196 (ADNSTKNDATNTVL).

The protein belongs to the universal ribosomal protein uL22 family. As to quaternary structure, part of the 50S ribosomal subunit.

Functionally, this protein binds specifically to 23S rRNA; its binding is stimulated by other ribosomal proteins, e.g. L4, L17, and L20. It is important during the early stages of 50S assembly. It makes multiple contacts with different domains of the 23S rRNA in the assembled 50S subunit and ribosome. In terms of biological role, the globular domain of the protein is located near the polypeptide exit tunnel on the outside of the subunit, while an extended beta-hairpin is found that lines the wall of the exit tunnel in the center of the 70S ribosome. This is Large ribosomal subunit protein uL22 from Mesomycoplasma hyopneumoniae (strain 7448) (Mycoplasma hyopneumoniae).